Consider the following 397-residue polypeptide: Putative 8-amino-7-oxononanoate synthase (397 aa).

Arg22 is a substrate binding site. 109–110 contributes to the pyridoxal 5'-phosphate binding site; that stretch reads GW. Residue His139 participates in substrate binding. Pyridoxal 5'-phosphate contacts are provided by residues Ser187, 212–215, and 241–244; these read DEAH and TFSK. Lys244 carries the N6-(pyridoxal phosphate)lysine modification. A substrate-binding site is contributed by Thr358.

This sequence belongs to the class-II pyridoxal-phosphate-dependent aminotransferase family. BioF subfamily. In terms of assembly, homodimer. The cofactor is pyridoxal 5'-phosphate.

It catalyses the reaction 6-carboxyhexanoyl-[ACP] + L-alanine + H(+) = (8S)-8-amino-7-oxononanoate + holo-[ACP] + CO2. Its pathway is cofactor biosynthesis; biotin biosynthesis. Catalyzes the decarboxylative condensation of pimeloyl-[acyl-carrier protein] and L-alanine to produce 8-amino-7-oxononanoate (AON), [acyl-carrier protein], and carbon dioxide. The chain is Putative 8-amino-7-oxononanoate synthase (bioF) from Bordetella parapertussis (strain 12822 / ATCC BAA-587 / NCTC 13253).